Reading from the N-terminus, the 468-residue chain is Citrate synthase, mitochondrial (468 aa).

A mitochondrion-targeting transit peptide spans 1–30 (MSLITAGRLCARILGAKNSPCALIAARQAS). Catalysis depends on residues histidine 303 and histidine 349. Arginine 358 contacts oxaloacetate. Residue aspartate 404 is part of the active site. 2 residues coordinate oxaloacetate: arginine 430 and arginine 450.

Belongs to the citrate synthase family. In terms of assembly, homodimer.

It localises to the mitochondrion matrix. It carries out the reaction oxaloacetate + acetyl-CoA + H2O = citrate + CoA + H(+). It functions in the pathway carbohydrate metabolism; tricarboxylic acid cycle; isocitrate from oxaloacetate: step 1/2. Functionally, key enzyme of the Krebs tricarboxylic acid cycle which catalyzes the synthesis of citrate from acetyl coenzyme A and oxaloacetate. The sequence is that of Citrate synthase, mitochondrial (cs) from Xenopus tropicalis (Western clawed frog).